A 1096-amino-acid polypeptide reads, in one-letter code: MPKRDDINSVLVIGSGPIVIGQAAEFDYSGTQACRVLREEGVRVILVNSNPATIMTDPGFADATYIEPITSEVLEKIIIKERPDAVLPTLGGQTALNAAIRLDELGILAKHGVELIGAKVEAIQKGEDRQLFKDLVIESGADVARSHVAKTLEQAVEFAEDLGYPLVIRPSFTMGGLGSGFAHTRQELERMVADGLQSSPTTEVLLEESILGWKEYELELMRDTADNTVVVCSIENVDPVGVHTGDSITVAPALTLTDREYQHMRDIGIDIIRRVGVDTGGCNIQFAVDPADGRLIVIEMNPRVSRSSALASKATGFPIAKIAAKLAIGYRLDEIPNDITKVTPASFEPTLDYVVVKVPRFAFEKFPAADAELTTTMKSVGEAMAIGRNYSTALQKALRSLEKRGSSFHWGPESRSVDELLETSRTPTDGRIVTVQQALRAGATAEQVFDATKIDPWFIDQIVLINEVADAVRDADELDAETLREAKDHGFSDAQIAEIRGLVEQEVRDARHAADIRPVYKTVDTCAGEFPALTPYHYSSYDSETEIVPSDRRKVIILGSGPNRIGQGIEFDYSCVHASFALADAGYETIMINCNPETVSTDYDTSDRLYFEPLTLEDVLEIVHVEQQAGELVGVVVQLGGQTALGLAKGLEAAGVPILGTSPSAIDLAEERGLFSGILDTAGLVAPRNGTAVAIDEAVVVAEGIGYPVLVRPSYVLGGRGMEIVFDTATLHDYFLRMADQGIIGEGKPLLIDRFLDDAIEIDIDAIYDGTELYVGGVMEHIEEAGIHSGDSSCTLPPVTLGRGQIQQVVDAARAIAEGVGVRGLLNVQFAIGAGVLYVLEANPRASRTVPFVSKALGIPLAKAASLVMVGTSIAELKASGLLPERDGSDVPMDSPVAVKEAVLPFKRFRTKDGLIVDSVLGPEMRSTGEVMGIDRDFPRAFAKSQEAAFGGLPLSGTVFVSVADRDKRSIVLPVLRLQQLGFEVLATAGTAEILSRNGIQARVVRKYSEEPAAGDSPSIVDLINRDEVDVVINTPSGRTARADGYEIRAAAVAADKALFTTIAQLTAAVASFDAIRAGFDVTSLQDYAIAREARR.

The carboxyphosphate synthetic domain stretch occupies residues 1 to 402 (MPKRDDINSV…ALQKALRSLE (402 aa)). Residues Arg-129, Arg-169, Gly-175, Gly-176, Glu-208, Ile-210, Glu-215, Gly-241, Val-242, His-243, Gln-285, and Glu-299 each contribute to the ATP site. The 196-residue stretch at 133-328 (KDLVIESGAD…IAKIAAKLAI (196 aa)) folds into the ATP-grasp 1 domain. The Mg(2+) site is built by Gln-285, Glu-299, and Asn-301. Mn(2+) contacts are provided by Gln-285, Glu-299, and Asn-301. Positions 403 to 547 (KRGSSFHWGP…YSSYDSETEI (145 aa)) are oligomerization domain. The segment at 548 to 950 (VPSDRRKVII…AFAKSQEAAF (403 aa)) is carbamoyl phosphate synthetic domain. The 195-residue stretch at 676 to 870 (SGILDTAGLV…LAKAASLVMV (195 aa)) folds into the ATP-grasp 2 domain. 10 residues coordinate ATP: Arg-712, Arg-754, Leu-756, Glu-761, Gly-786, Ile-787, His-788, Ser-789, Gln-829, and Glu-841. Positions 829, 841, and 843 each coordinate Mg(2+). Residues Gln-829, Glu-841, and Asn-843 each contribute to the Mn(2+) site. An MGS-like domain is found at 951-1095 (GGLPLSGTVF…QDYAIAREAR (145 aa)). The segment at 951 to 1096 (GGLPLSGTVF…DYAIAREARR (146 aa)) is allosteric domain.

It belongs to the CarB family. In terms of assembly, composed of two chains; the small (or glutamine) chain promotes the hydrolysis of glutamine to ammonia, which is used by the large (or ammonia) chain to synthesize carbamoyl phosphate. Tetramer of heterodimers (alpha,beta)4. Requires Mg(2+) as cofactor. Mn(2+) serves as cofactor.

The enzyme catalyses hydrogencarbonate + L-glutamine + 2 ATP + H2O = carbamoyl phosphate + L-glutamate + 2 ADP + phosphate + 2 H(+). The catalysed reaction is hydrogencarbonate + NH4(+) + 2 ATP = carbamoyl phosphate + 2 ADP + phosphate + 2 H(+). The protein operates within amino-acid biosynthesis; L-arginine biosynthesis; carbamoyl phosphate from bicarbonate: step 1/1. It functions in the pathway pyrimidine metabolism; UMP biosynthesis via de novo pathway; (S)-dihydroorotate from bicarbonate: step 1/3. Functionally, large subunit of the glutamine-dependent carbamoyl phosphate synthetase (CPSase). CPSase catalyzes the formation of carbamoyl phosphate from the ammonia moiety of glutamine, carbonate, and phosphate donated by ATP, constituting the first step of 2 biosynthetic pathways, one leading to arginine and/or urea and the other to pyrimidine nucleotides. The large subunit (synthetase) binds the substrates ammonia (free or transferred from glutamine from the small subunit), hydrogencarbonate and ATP and carries out an ATP-coupled ligase reaction, activating hydrogencarbonate by forming carboxy phosphate which reacts with ammonia to form carbamoyl phosphate. This is Carbamoyl phosphate synthase large chain from Clavibacter michiganensis subsp. michiganensis (strain NCPPB 382).